We begin with the raw amino-acid sequence, 542 residues long: CTP synthase (542 aa).

The segment at 1-265 is amidoligase domain; it reads MPRYIFITGG…DTEILRCFGI (265 aa). Ser13 lines the CTP pocket. Ser13 lines the UTP pocket. 14-19 serves as a coordination point for ATP; it reads SLGKGL. Residue Tyr54 coordinates L-glutamine. Asp71 contacts ATP. The Mg(2+) site is built by Asp71 and Glu139. CTP is bound by residues 146 to 148, 186 to 191, and Lys222; these read DIE and KTKPTQ. Residues 186 to 191 and Lys222 each bind UTP; that span reads KTKPTQ. 238–240 is a binding site for ATP; sequence RDA. Positions 298 to 541 constitute a Glutamine amidotransferase type-1 domain; it reads YVGLLDAYKS…IAAALHQSRM (244 aa). Gly353 lines the L-glutamine pocket. Residue Cys380 is the Nucleophile; for glutamine hydrolysis of the active site. L-glutamine is bound by residues 381–384, Glu404, and Arg469; that span reads YGMQ. Active-site residues include His514 and Glu516.

Belongs to the CTP synthase family. Homotetramer.

The catalysed reaction is UTP + L-glutamine + ATP + H2O = CTP + L-glutamate + ADP + phosphate + 2 H(+). The enzyme catalyses L-glutamine + H2O = L-glutamate + NH4(+). It carries out the reaction UTP + NH4(+) + ATP = CTP + ADP + phosphate + 2 H(+). The protein operates within pyrimidine metabolism; CTP biosynthesis via de novo pathway; CTP from UDP: step 2/2. With respect to regulation, allosterically activated by GTP, when glutamine is the substrate; GTP has no effect on the reaction when ammonia is the substrate. The allosteric effector GTP functions by stabilizing the protein conformation that binds the tetrahedral intermediate(s) formed during glutamine hydrolysis. Inhibited by the product CTP, via allosteric rather than competitive inhibition. Functionally, catalyzes the ATP-dependent amination of UTP to CTP with either L-glutamine or ammonia as the source of nitrogen. Regulates intracellular CTP levels through interactions with the four ribonucleotide triphosphates. This chain is CTP synthase, found in Maricaulis maris (strain MCS10) (Caulobacter maris).